Reading from the N-terminus, the 147-residue chain is Molybdopterin synthase catalytic subunit 1 (147 aa).

Substrate contacts are provided by residues 43 to 45 (NVR), 109 to 110 (HR), lysine 125, and 132 to 134 (KKE).

Belongs to the MoaE family. In terms of assembly, heterotetramer of 2 MoaD subunits and 2 MoaE subunits. Also stable as homodimer. The enzyme changes between these two forms during catalysis.

It catalyses the reaction 2 [molybdopterin-synthase sulfur-carrier protein]-C-terminal-Gly-aminoethanethioate + cyclic pyranopterin phosphate + H2O = molybdopterin + 2 [molybdopterin-synthase sulfur-carrier protein]-C-terminal Gly-Gly + 2 H(+). It functions in the pathway cofactor biosynthesis; molybdopterin biosynthesis. Functionally, converts molybdopterin precursor Z into molybdopterin. This requires the incorporation of two sulfur atoms into precursor Z to generate a dithiolene group. The sulfur is provided by MoaD. In Mycobacterium tuberculosis (strain ATCC 25618 / H37Rv), this protein is Molybdopterin synthase catalytic subunit 1 (moaE1).